Consider the following 61-residue polypeptide: Probable tautomerase SMU_1087 (61 aa).

Pro2 serves as the catalytic Proton acceptor; via imino nitrogen.

It belongs to the 4-oxalocrotonate tautomerase family.

The protein is Probable tautomerase SMU_1087 of Streptococcus mutans serotype c (strain ATCC 700610 / UA159).